A 608-amino-acid chain; its full sequence is 1-deoxy-D-xylulose-5-phosphate synthase (608 aa).

Residues His66 and 107–109 (GHA) each bind thiamine diphosphate. Asp138 provides a ligand contact to Mg(2+). Thiamine diphosphate-binding positions include 139-140 (GA), Asn167, Phe277, and Glu350. Asn167 lines the Mg(2+) pocket.

The protein belongs to the transketolase family. DXPS subfamily. In terms of assembly, homodimer. The cofactor is Mg(2+). Thiamine diphosphate serves as cofactor.

The enzyme catalyses D-glyceraldehyde 3-phosphate + pyruvate + H(+) = 1-deoxy-D-xylulose 5-phosphate + CO2. It functions in the pathway metabolic intermediate biosynthesis; 1-deoxy-D-xylulose 5-phosphate biosynthesis; 1-deoxy-D-xylulose 5-phosphate from D-glyceraldehyde 3-phosphate and pyruvate: step 1/1. Its function is as follows. Catalyzes the acyloin condensation reaction between C atoms 2 and 3 of pyruvate and glyceraldehyde 3-phosphate to yield 1-deoxy-D-xylulose-5-phosphate (DXP). The polypeptide is 1-deoxy-D-xylulose-5-phosphate synthase (Thermotoga sp. (strain RQ2)).